The following is a 402-amino-acid chain: Baeyer-Villiger oxidase notM (402 aa).

Belongs to the questin oxidase family.

Its function is as follows. Baeyer-Villiger oxidase; part of the gene cluster that mediates the biosynthesis of notoamide, a fungal indole alkaloid that belongs to a family of natural products containing a characteristic bicyclo[2.2.2]diazaoctane core. The first step of notoamide biosynthesis involves coupling of L-proline and L-tryptophan by the bimodular NRPS notE, to produce cyclo-L-tryptophan-L-proline called brevianamide F. The reverse prenyltransferase notF then acts as a deoxybrevianamide E synthase and converts brevianamide F to deoxybrevianamide E via reverse prenylation at C-2 of the indole ring leading to the bicyclo[2.2.2]diazaoctane core. Deoxybrevianamide E is further hydroxylated at C-6 of the indole ring, likely catalyzed by the cytochrome P450 monooxygenase notG, to yield 6-hydroxy-deoxybrevianamide E. 6-hydroxy-deoxybrevianamide E is a specific substrate of the prenyltransferase notC for normal prenylation at C-7 to produce 6-hydroxy-7-prenyl-deoxybrevianamide, also called notoamide S. As the proposed pivotal branching point in notoamide biosynthesis, notoamide S can be diverted to notoamide E through an oxidative pyran ring closure putatively catalyzed by either notH cytochrome P450 monooxygenase or the notD FAD-linked oxidoreductase. This step would be followed by an indole 2,3-epoxidation-initiated pinacol-like rearrangement catalyzed by the notB FAD-dependent monooxygenase leading to the formation of notoamide C and notoamide D. On the other hand notoamide S is converted to notoamide T by notH (or notD), a bifunctional oxidase that also functions as the intramolecular Diels-Alderase responsible for generation of (+)-notoamide T. To generate antipodal (-)-notoaminide T, notH' (or notD') in Aspergillus versicolor is expected to catalyze a Diels-Alder reaction leading to the opposite stereochemistry. The remaining oxidoreductase notD (or notH) likely catalyzes the oxidative pyran ring formation to yield (+)-stephacidin A. The FAD-dependent monooxygenase notI is highly similar to notB and is predicted to catalyze a similar conversion from (+)-stephacidin A to (-)-notoamide B via the 2,3-epoxidation of (+)-stephacidin A followed by a pinacol-type rearrangement. Finally, it remains unclear which enzyme could be responsible for the final hydroxylation steps leading to notoamide A and sclerotiamide. The function of notM in the notoamide biosynthesis has not been determined yet. This chain is Baeyer-Villiger oxidase notM, found in Aspergillus sp. (strain MF297-2).